The following is a 39-amino-acid chain: Natriuretic peptide TNPc (39 aa).

A disulfide bridge connects residues C9 and C25.

This sequence belongs to the natriuretic peptide family. As to expression, expressed by the venom gland.

It is found in the secreted. Snake venom natriuretic peptide that exhibits vasoactive and hypotensive activity. Produces a near complete relaxation in pre-contracted aortae by activating the natriuretic peptide receptor 1 (NPR1). Stimulates cGMP production through the natriuretic peptide receptor 1 (NPR1) with high potencies for the rat NPR1 (EC(50)=100 nM), and very weak potencies over human NPR1 (28% activation at 10 uM). In vivo, reduces both systolic and diastolic blood pressure with no effect on heart rate, when intravenously injected in conscious rabbits. Also enhances the bradycardia due to cardiac afferent stimulation (Bezold-Jarisch reflex). The polypeptide is Natriuretic peptide TNPc (Oxyuranus microlepidotus (Inland taipan)).